The primary structure comprises 93 residues: Sec-independent protein translocase protein TatA (93 aa).

Residues 1-21 traverse the membrane as a helical segment; that stretch reads MGIFDWKHWIVILVVVVLVFG. Residues 43 to 93 are disordered; that stretch reads MNDDEKPAEPVVPPAAQPVPPVQPQQSAPLNQPHTIDVQAQKVEEPTRKDS. The segment covering 52–65 has biased composition (pro residues); it reads PVVPPAAQPVPPVQ. The span at 84-93 shows a compositional bias: basic and acidic residues; that stretch reads KVEEPTRKDS.

Belongs to the TatA/E family. The Tat system comprises two distinct complexes: a TatABC complex, containing multiple copies of TatA, TatB and TatC subunits, and a separate TatA complex, containing only TatA subunits. Substrates initially bind to the TatABC complex, which probably triggers association of the separate TatA complex to form the active translocon.

The protein localises to the cell inner membrane. Part of the twin-arginine translocation (Tat) system that transports large folded proteins containing a characteristic twin-arginine motif in their signal peptide across membranes. TatA could form the protein-conducting channel of the Tat system. The chain is Sec-independent protein translocase protein TatA from Pseudomonas fluorescens (strain ATCC BAA-477 / NRRL B-23932 / Pf-5).